Consider the following 439-residue polypeptide: Tol-Pal system protein TolB (439 aa).

The first 21 residues, 1 to 21 (MRFRLALSLLSLALFAAPAAA), serve as a signal peptide directing secretion.

It belongs to the TolB family. In terms of assembly, the Tol-Pal system is composed of five core proteins: the inner membrane proteins TolA, TolQ and TolR, the periplasmic protein TolB and the outer membrane protein Pal. They form a network linking the inner and outer membranes and the peptidoglycan layer.

The protein resides in the periplasm. In terms of biological role, part of the Tol-Pal system, which plays a role in outer membrane invagination during cell division and is important for maintaining outer membrane integrity. The chain is Tol-Pal system protein TolB from Rhizorhabdus wittichii (strain DSM 6014 / CCUG 31198 / JCM 15750 / NBRC 105917 / EY 4224 / RW1) (Sphingomonas wittichii).